The chain runs to 327 residues: Aldo/keto reductase slr0942 (327 aa).

18–27 lines the NADP(+) pocket; sequence GEQIPALGLG. Catalysis depends on Tyr57, which acts as the Proton donor. Position 119 (His119) interacts with substrate. Residue 216 to 280 participates in NADP(+) binding; that stretch reads SPLGSGDRPA…SVNPERLEQN (65 aa).

This sequence belongs to the aldo/keto reductase family. As to quaternary structure, monomer.

It carries out the reaction a secondary alcohol + NADP(+) = a ketone + NADPH + H(+). Curcumin non-competitively inhibits the enzyme with respect to furfural. To a lesser extent, enzyme activity is also inhibited by indomethacin, coumarate, coumarin, and alrestatin. Functionally, aldo/keto reductase with broad substrate spectrum. Catalyzes the NADPH-dependent reduction of aldehyde- and ketone-groups of different classes of carbonyl compounds to the corresponding alcohols. Highest enzymatic efficiency is observed with 4-oxonon-2-enal (4-ONE) and 4-hydroxynon-2-enal (4-HNE), that are lipid peroxidation products, and 9,10-phenanthrenequinone (9,10-PQ), a photoproduct of phenanthrene that is one of the most prevalent polycyclic aromatic hydrocarbons in the environment. Is also active on sugar-derived reactive carbonyls such as methylglyoxal (MG), glyoxal and 3-deoxyglucosone (3-DG), and on other lipid-derived carbonyls such as acrolein. May be involved in the detoxification of the toxic lipid peroxidation products 4-ONE and 4-HNE besides many other exo- and endogenic reactive carbonyl compounds (RCs) that may lead to photoinhibition or other cell damages. This is Aldo/keto reductase slr0942 from Synechocystis sp. (strain ATCC 27184 / PCC 6803 / Kazusa).